Reading from the N-terminus, the 1026-residue chain is Beta-galactosidase (1026 aa).

Substrate-binding residues include asparagine 104 and aspartate 203. Aspartate 203 contributes to the Na(+) binding site. The Mg(2+) site is built by glutamate 418, histidine 420, and glutamate 463. Substrate-binding positions include glutamate 463 and 539–542 (EYAH). Glutamate 463 (proton donor) is an active-site residue. The active-site Nucleophile is glutamate 539. Residue asparagine 599 participates in Mg(2+) binding. Na(+) is bound by residues phenylalanine 603 and asparagine 606. Substrate-binding residues include asparagine 606 and tryptophan 1002.

This sequence belongs to the glycosyl hydrolase 2 family. As to quaternary structure, homotetramer. Mg(2+) is required as a cofactor. Requires Na(+) as cofactor.

The enzyme catalyses Hydrolysis of terminal non-reducing beta-D-galactose residues in beta-D-galactosides.. This Erwinia tasmaniensis (strain DSM 17950 / CFBP 7177 / CIP 109463 / NCPPB 4357 / Et1/99) protein is Beta-galactosidase.